The sequence spans 117 residues: Multidrug resistance protein EbrB (117 aa).

A run of 4 helical transmembrane segments spans residues 3-23 (GLLY…MLKL), 31-51 (WPIA…SFSL), 59-79 (AYAT…FLLF), and 81-101 (ETIS…VVVL).

This sequence belongs to the drug/metabolite transporter (DMT) superfamily. Small multidrug resistance (SMR) (TC 2.A.7.1) family. EbrA/EbrB subfamily. As to quaternary structure, the efflux pump is composed of EbrA and EbrB.

The protein localises to the cell membrane. In terms of biological role, part of a multidrug efflux pump. Confers resistance to cationic lipophilic dyes such as ethidium bromide, acriflavine, pyronine Y and safranin O. The efflux is probably coupled to an influx of protons. This chain is Multidrug resistance protein EbrB (ebrB), found in Bacillus subtilis (strain 168).